Here is a 103-residue protein sequence, read N- to C-terminus: MYAVFQSGGKQHRVAEGHTVRLEKLEVATGETIEFDQVLLIADGETVHVGAPLVAGGKVVAEVVSHGRGDKVTIVKFRRRKHHDKKMGHRQWFTEVKITAINA.

Belongs to the bacterial ribosomal protein bL21 family. In terms of assembly, part of the 50S ribosomal subunit. Contacts protein L20.

Its function is as follows. This protein binds to 23S rRNA in the presence of protein L20. The polypeptide is Large ribosomal subunit protein bL21 (Shewanella baltica (strain OS223)).